The primary structure comprises 503 residues: ATP synthase subunit alpha (503 aa).

170–177 contacts ATP; that stretch reads GDRQTGKT.

F-type ATPases have 2 components, CF(1) - the catalytic core - and CF(0) - the membrane proton channel. CF(1) has five subunits: alpha(3), beta(3), gamma(1), delta(1), epsilon(1). CF(0) has four main subunits: a(1), b(1), b'(1) and c(9-12).

It localises to the cellular thylakoid membrane. It catalyses the reaction ATP + H2O + 4 H(+)(in) = ADP + phosphate + 5 H(+)(out). Inhibited by dicyclohexylcarbodiimide. Its function is as follows. Produces ATP from ADP in the presence of a proton gradient across the membrane. The alpha chain is a regulatory subunit. In terms of biological role, the complex from the organism is particularly stable to disruption and remains functional after 6 hrs at 55 degrees Celsius. This Thermosynechococcus vestitus (strain NIES-2133 / IAM M-273 / BP-1) protein is ATP synthase subunit alpha.